A 212-amino-acid polypeptide reads, in one-letter code: Fucoxanthin-chlorophyll a-c binding protein E, chloroplastic (212 aa).

The N-terminal 34 residues, 1–34, are a transit peptide targeting the chloroplast; that stretch reads MAIACAAAPGLRGAEPFNGAALATSAKSSSAMKM. The next 3 helical transmembrane spans lie at 76–96, 117–137, and 178–198; these read IAML…PGML, IPPL…LFVV, and GRAA…SNQP.

It belongs to the fucoxanthin chlorophyll protein family. The LHC complex of chromophytic algae is composed of fucoxanthin, chlorophyll A and C bound non-covalently by fucoxanthin chlorophyll proteins (FCPs). The ratio of pigments in this LHC is; fucoxanthin: chlorophyll C: chlorophyll A; (0.6-1): (0.1-0.3): (1).

The protein localises to the plastid. It localises to the chloroplast thylakoid membrane. The light-harvesting complex (LHC) functions as a light receptor, it captures and delivers excitation energy to photosystems with which it is closely associated. Energy is transferred from the carotenoid and chlorophyll C (or B) to chlorophyll A and the photosynthetic reaction centers where it is used to synthesize ATP and reducing power. The sequence is that of Fucoxanthin-chlorophyll a-c binding protein E, chloroplastic (FCPE) from Macrocystis pyrifera (Giant kelp).